A 196-amino-acid chain; its full sequence is 3-isopropylmalate dehydratase small subunit (196 aa).

The protein belongs to the LeuD family. LeuD type 1 subfamily. In terms of assembly, heterodimer of LeuC and LeuD.

The enzyme catalyses (2R,3S)-3-isopropylmalate = (2S)-2-isopropylmalate. The protein operates within amino-acid biosynthesis; L-leucine biosynthesis; L-leucine from 3-methyl-2-oxobutanoate: step 2/4. Functionally, catalyzes the isomerization between 2-isopropylmalate and 3-isopropylmalate, via the formation of 2-isopropylmaleate. The polypeptide is 3-isopropylmalate dehydratase small subunit (Corynebacterium aurimucosum (strain ATCC 700975 / DSM 44827 / CIP 107346 / CN-1) (Corynebacterium nigricans)).